Consider the following 329-residue polypeptide: Ornithine carbamoyltransferase (329 aa).

Residues 51-54 (STRT), Gln-78, Arg-102, and 129-132 (HPVQ) contribute to the carbamoyl phosphate site. L-ornithine contacts are provided by residues Asn-174, Asp-238, and 242 to 243 (SM). Carbamoyl phosphate-binding positions include 278-279 (CL) and Arg-306.

This sequence belongs to the aspartate/ornithine carbamoyltransferase superfamily. OTCase family.

It is found in the cytoplasm. It carries out the reaction carbamoyl phosphate + L-ornithine = L-citrulline + phosphate + H(+). The protein operates within amino-acid biosynthesis; L-arginine biosynthesis; L-arginine from L-ornithine and carbamoyl phosphate: step 1/3. Reversibly catalyzes the transfer of the carbamoyl group from carbamoyl phosphate (CP) to the N(epsilon) atom of ornithine (ORN) to produce L-citrulline. This is Ornithine carbamoyltransferase from Helicobacter hepaticus (strain ATCC 51449 / 3B1).